Here is a 470-residue protein sequence, read N- to C-terminus: Siroheme synthase 2 (470 aa).

The interval 1–202 (MDYLPMFAKL…EDWQGAEQWL (202 aa)) is precorrin-2 dehydrogenase /sirohydrochlorin ferrochelatase. NAD(+) is bound by residues 22–23 (EV) and 43–44 (PE). The residue at position 126 (Ser126) is a Phosphoserine. Residues 214–470 (GEVVLVGAGP…TCDLKLVSLA (257 aa)) are uroporphyrinogen-III C-methyltransferase. Pro223 contacts S-adenosyl-L-methionine. Asp246 acts as the Proton acceptor in catalysis. Catalysis depends on Lys268, which acts as the Proton donor. Residues 299–301 (GGD), 329–330 (TA), Met381, and Gly410 contribute to the S-adenosyl-L-methionine site.

The protein in the N-terminal section; belongs to the precorrin-2 dehydrogenase / sirohydrochlorin ferrochelatase family. This sequence in the C-terminal section; belongs to the precorrin methyltransferase family.

The catalysed reaction is uroporphyrinogen III + 2 S-adenosyl-L-methionine = precorrin-2 + 2 S-adenosyl-L-homocysteine + H(+). It catalyses the reaction precorrin-2 + NAD(+) = sirohydrochlorin + NADH + 2 H(+). The enzyme catalyses siroheme + 2 H(+) = sirohydrochlorin + Fe(2+). The protein operates within cofactor biosynthesis; adenosylcobalamin biosynthesis; precorrin-2 from uroporphyrinogen III: step 1/1. It participates in cofactor biosynthesis; adenosylcobalamin biosynthesis; sirohydrochlorin from precorrin-2: step 1/1. Its pathway is porphyrin-containing compound metabolism; siroheme biosynthesis; precorrin-2 from uroporphyrinogen III: step 1/1. It functions in the pathway porphyrin-containing compound metabolism; siroheme biosynthesis; siroheme from sirohydrochlorin: step 1/1. The protein operates within porphyrin-containing compound metabolism; siroheme biosynthesis; sirohydrochlorin from precorrin-2: step 1/1. Functionally, multifunctional enzyme that catalyzes the SAM-dependent methylations of uroporphyrinogen III at position C-2 and C-7 to form precorrin-2 via precorrin-1. Then it catalyzes the NAD-dependent ring dehydrogenation of precorrin-2 to yield sirohydrochlorin. Finally, it catalyzes the ferrochelation of sirohydrochlorin to yield siroheme. The chain is Siroheme synthase 2 from Aeromonas hydrophila subsp. hydrophila (strain ATCC 7966 / DSM 30187 / BCRC 13018 / CCUG 14551 / JCM 1027 / KCTC 2358 / NCIMB 9240 / NCTC 8049).